A 737-amino-acid chain; its full sequence is Catalase-peroxidase (737 aa).

The interval 1 to 33 (MPEATEHPPIGEAQTEPAQSGCPMVIKPPVEGG) is disordered. Positions 107–235 (WHAAGTYRVQ…LGASHMGLIY (129 aa)) form a cross-link, tryptophyl-tyrosyl-methioninium (Trp-Tyr) (with M-261). The active-site Proton acceptor is histidine 108. Positions 235-261 (YVNPEGPEGNPDPIAAAIDIRETFGRM) form a cross-link, tryptophyl-tyrosyl-methioninium (Tyr-Met) (with W-107). Residue histidine 276 participates in heme binding.

Belongs to the peroxidase family. Peroxidase/catalase subfamily. Homodimer or homotetramer. It depends on heme b as a cofactor. Formation of the three residue Trp-Tyr-Met cross-link is important for the catalase, but not the peroxidase activity of the enzyme.

The catalysed reaction is H2O2 + AH2 = A + 2 H2O. It catalyses the reaction 2 H2O2 = O2 + 2 H2O. Its function is as follows. Bifunctional enzyme with both catalase and broad-spectrum peroxidase activity. May play a role in polycyclic aromatic hydrocarbon (PAH) metabolism. This Mycolicibacterium vanbaalenii (Mycobacterium vanbaalenii) protein is Catalase-peroxidase.